We begin with the raw amino-acid sequence, 682 residues long: Polyadenylate-binding protein 5 (682 aa).

4 RRM domains span residues 59-136 (SSLY…LSNR), 146-223 (GNVF…HFVR), 239-316 (TNVY…RAQK), and 342-419 (SNLY…LAQR). The PABC domain maps to 588–665 (TISKLASDLA…ALDVLRRSAD (78 aa)). Ser600 bears the Phosphoserine mark.

Belongs to the polyadenylate-binding protein type-1 family. Expressed predominantly in immature flowers but also at lower levels in mature flowers and siliques. Detected in tapetum, pollen, ovules and developing seeds. Also detected in primary inflorescences and immature siliques.

The protein resides in the cytoplasm. It is found in the nucleus. In terms of biological role, binds the poly(A) tail of mRNA. Appears to be an important mediator of the multiple roles of the poly(A) tail in mRNA biogenesis, stability and translation. This chain is Polyadenylate-binding protein 5 (PAB5), found in Arabidopsis thaliana (Mouse-ear cress).